A 969-amino-acid chain; its full sequence is Isoleucine--tRNA ligase (969 aa).

A 'HIGH' region motif is present at residues 68 to 78 (PYANGNLHMGH). An L-isoleucyl-5'-AMP-binding site is contributed by Glu584. A 'KMSKS' region motif is present at residues 625-629 (KMSKS). Residue Lys628 coordinates ATP. Residues Cys938, Cys941, Cys958, and Cys961 each coordinate Zn(2+).

This sequence belongs to the class-I aminoacyl-tRNA synthetase family. IleS type 1 subfamily. Monomer. Zn(2+) serves as cofactor.

It is found in the cytoplasm. The catalysed reaction is tRNA(Ile) + L-isoleucine + ATP = L-isoleucyl-tRNA(Ile) + AMP + diphosphate. Functionally, catalyzes the attachment of isoleucine to tRNA(Ile). As IleRS can inadvertently accommodate and process structurally similar amino acids such as valine, to avoid such errors it has two additional distinct tRNA(Ile)-dependent editing activities. One activity is designated as 'pretransfer' editing and involves the hydrolysis of activated Val-AMP. The other activity is designated 'posttransfer' editing and involves deacylation of mischarged Val-tRNA(Ile). The sequence is that of Isoleucine--tRNA ligase from Prochlorococcus marinus (strain SARG / CCMP1375 / SS120).